The sequence spans 271 residues: Shikimate dehydrogenase (NADP(+)) (271 aa).

Shikimate is bound by residues 14 to 16 (SRS) and threonine 61. Lysine 65 functions as the Proton acceptor in the catalytic mechanism. Residues asparagine 86 and aspartate 102 each coordinate shikimate. Residues 126–130 (GAGGA), 149–154 (NRTFSR), and methionine 213 each bind NADP(+). Residue tyrosine 215 participates in shikimate binding. Glycine 238 serves as a coordination point for NADP(+).

The protein belongs to the shikimate dehydrogenase family. In terms of assembly, homodimer.

The catalysed reaction is shikimate + NADP(+) = 3-dehydroshikimate + NADPH + H(+). The protein operates within metabolic intermediate biosynthesis; chorismate biosynthesis; chorismate from D-erythrose 4-phosphate and phosphoenolpyruvate: step 4/7. In terms of biological role, involved in the biosynthesis of the chorismate, which leads to the biosynthesis of aromatic amino acids. Catalyzes the reversible NADPH linked reduction of 3-dehydroshikimate (DHSA) to yield shikimate (SA). The sequence is that of Shikimate dehydrogenase (NADP(+)) from Histophilus somni (strain 129Pt) (Haemophilus somnus).